A 23-amino-acid polypeptide reads, in one-letter code: Septenin 2c (23 aa).

Expressed in skin granular glands.

Its subcellular location is the secreted. Functionally, may act as an antimicrobial peptide. The polypeptide is Septenin 2c (Osteopilus septentrionalis (Cuban treefrog)).